The following is a 249-amino-acid chain: Segregation and condensation protein A (249 aa).

It belongs to the ScpA family. In terms of assembly, component of a cohesin-like complex composed of ScpA, ScpB and the Smc homodimer, in which ScpA and ScpB bind to the head domain of Smc. The presence of the three proteins is required for the association of the complex with DNA.

Its subcellular location is the cytoplasm. In terms of biological role, participates in chromosomal partition during cell division. May act via the formation of a condensin-like complex containing Smc and ScpB that pull DNA away from mid-cell into both cell halves. The chain is Segregation and condensation protein A from Clostridium acetobutylicum (strain ATCC 824 / DSM 792 / JCM 1419 / IAM 19013 / LMG 5710 / NBRC 13948 / NRRL B-527 / VKM B-1787 / 2291 / W).